A 469-amino-acid polypeptide reads, in one-letter code: Probable periplasmic serine endoprotease DegP-like (469 aa).

A signal peptide spans 1–25 (MNRLLKQVCMVVVSSFMMASMLTHA). Residues H114, D144, and S217 each act as charge relay system in the active site. Substrate is bound by residues 215 to 217 (GNS) and 272 to 276 (LGVLI). 2 consecutive PDZ domains span residues 261–352 (LKSD…YRDG) and 358–458 (SVTL…IRQG).

This sequence belongs to the peptidase S1C family.

The protein localises to the periplasm. The enzyme catalyses Acts on substrates that are at least partially unfolded. The cleavage site P1 residue is normally between a pair of hydrophobic residues, such as Val-|-Val.. Functionally, might be efficient in the degradation of transiently denatured and unfolded proteins which accumulate in the periplasm following stress conditions. The polypeptide is Probable periplasmic serine endoprotease DegP-like (Marinomonas sp. (strain MWYL1)).